The chain runs to 441 residues: Alpha-methylserine aldolase (441 aa).

N6-(pyridoxal phosphate)lysine is present on K256.

Belongs to the SHMT family. Alpha-methylserine aldolase subfamily. In terms of assembly, homodimer. Pyridoxal 5'-phosphate is required as a cofactor.

It carries out the reaction 2-methyl-L-serine = formaldehyde + L-alanine. Its function is as follows. Catalyzes the reversible interconversion of alpha-methyl-L-serine to L-alanine and formaldehyde. The protein is Alpha-methylserine aldolase of Variovorax paradoxus.